Consider the following 295-residue polypeptide: GTPase Era (295 aa).

The Era-type G domain maps to 3-170 (KSGFVTIVGR…VDLMKTELPE (168 aa)). Residues 11 to 18 (GRPNVGKS) are G1. Residue 11–18 (GRPNVGKS) participates in GTP binding. The segment at 37 to 41 (QTTRN) is G2. Residues 58 to 61 (DTPG) form a G3 region. GTP-binding positions include 58–62 (DTPGI) and 120–123 (NKID). A G4 region spans residues 120-123 (NKID). A G5 region spans residues 149-151 (IAA). The 78-residue stretch at 201–278 (LRDEVPHGIA…NVKIWVKVRK (78 aa)) folds into the KH type-2 domain.

This sequence belongs to the TRAFAC class TrmE-Era-EngA-EngB-Septin-like GTPase superfamily. Era GTPase family. Monomer.

It is found in the cytoplasm. The protein resides in the cell membrane. In terms of biological role, an essential GTPase that binds both GDP and GTP, with rapid nucleotide exchange. Plays a role in 16S rRNA processing and 30S ribosomal subunit biogenesis and possibly also in cell cycle regulation and energy metabolism. The polypeptide is GTPase Era (Clostridium botulinum (strain Alaska E43 / Type E3)).